The primary structure comprises 75 residues: MKINKLTLNERKNDILSYFGEINAPCRTSEVAEHLGVSAYQARHYLQCLEKEGKIKRSPVRRGASTLWEISSIPP.

May have a possible regulatory function on the expression of the other daa genes. This is F1845 fimbrial adhesin operon regulatory protein DaaF (daaF) from Escherichia coli.